We begin with the raw amino-acid sequence, 171 residues long: 3-hydroxydecanoyl-[acyl-carrier-protein] dehydratase (171 aa).

Residue His-71 is part of the active site.

It belongs to the thioester dehydratase family. FabA subfamily. In terms of assembly, homodimer.

Its subcellular location is the cytoplasm. It catalyses the reaction a (3R)-hydroxyacyl-[ACP] = a (2E)-enoyl-[ACP] + H2O. The catalysed reaction is (3R)-hydroxydecanoyl-[ACP] = (2E)-decenoyl-[ACP] + H2O. It carries out the reaction (2E)-decenoyl-[ACP] = (3Z)-decenoyl-[ACP]. It participates in lipid metabolism; fatty acid biosynthesis. Necessary for the introduction of cis unsaturation into fatty acids. Catalyzes the dehydration of (3R)-3-hydroxydecanoyl-ACP to E-(2)-decenoyl-ACP and then its isomerization to Z-(3)-decenoyl-ACP. Can catalyze the dehydratase reaction for beta-hydroxyacyl-ACPs with saturated chain lengths up to 16:0, being most active on intermediate chain length. The protein is 3-hydroxydecanoyl-[acyl-carrier-protein] dehydratase of Rhizobium rhizogenes (strain K84 / ATCC BAA-868) (Agrobacterium radiobacter).